We begin with the raw amino-acid sequence, 407 residues long: 1-deoxy-D-xylulose 5-phosphate reductoisomerase (407 aa).

6 residues coordinate NADPH: Thr25, Gly26, Ser27, Ile28, Asn53, and Asn136. Residue Lys137 coordinates 1-deoxy-D-xylulose 5-phosphate. Glu138 is an NADPH binding site. Asp162 contacts Mn(2+). 4 residues coordinate 1-deoxy-D-xylulose 5-phosphate: Ser163, Glu164, Ser188, and His211. Glu164 contacts Mn(2+). An NADPH-binding site is contributed by Gly217. Residues Ser224, Asn229, Lys230, and Glu233 each contribute to the 1-deoxy-D-xylulose 5-phosphate site. Glu233 is a binding site for Mn(2+).

Belongs to the DXR family. Mg(2+) is required as a cofactor. Requires Mn(2+) as cofactor.

The enzyme catalyses 2-C-methyl-D-erythritol 4-phosphate + NADP(+) = 1-deoxy-D-xylulose 5-phosphate + NADPH + H(+). Its pathway is isoprenoid biosynthesis; isopentenyl diphosphate biosynthesis via DXP pathway; isopentenyl diphosphate from 1-deoxy-D-xylulose 5-phosphate: step 1/6. In terms of biological role, catalyzes the NADPH-dependent rearrangement and reduction of 1-deoxy-D-xylulose-5-phosphate (DXP) to 2-C-methyl-D-erythritol 4-phosphate (MEP). This chain is 1-deoxy-D-xylulose 5-phosphate reductoisomerase, found in Afipia carboxidovorans (strain ATCC 49405 / DSM 1227 / KCTC 32145 / OM5) (Oligotropha carboxidovorans).